A 157-amino-acid polypeptide reads, in one-letter code: Ribosomal RNA large subunit methyltransferase H (157 aa).

S-adenosyl-L-methionine is bound by residues leucine 73, glycine 104, and 123-128; that span reads LGPLTL.

The protein belongs to the RNA methyltransferase RlmH family. Homodimer.

It is found in the cytoplasm. The catalysed reaction is pseudouridine(1915) in 23S rRNA + S-adenosyl-L-methionine = N(3)-methylpseudouridine(1915) in 23S rRNA + S-adenosyl-L-homocysteine + H(+). In terms of biological role, specifically methylates the pseudouridine at position 1915 (m3Psi1915) in 23S rRNA. This Xylella fastidiosa (strain M23) protein is Ribosomal RNA large subunit methyltransferase H.